Here is a 57-residue protein sequence, read N- to C-terminus: MAPTLYDFHHLPHVKTQNESKKALWVTLLLTMFFTAVEIIGGLISNSLALLSDSAHM.

Residues 24 to 44 (LWVTLLLTMFFTAVEIIGGLI) form a helical membrane-spanning segment.

This sequence to cation A.eutrophus efflux system protein CzcD.

The protein localises to the cell membrane. This is an uncharacterized protein from Bacillus caldolyticus.